Consider the following 237-residue polypeptide: Proteasome subunit alpha type-5-B (237 aa).

Position 1 is an N-acetylmethionine (methionine 1). Residues lysine 43, lysine 66, and lysine 185 each participate in a glycyl lysine isopeptide (Lys-Gly) (interchain with G-Cter in ubiquitin) cross-link.

It belongs to the peptidase T1A family. As to quaternary structure, component of the 20S core complex of the 26S proteasome. The 26S proteasome is composed of a core protease (CP), known as the 20S proteasome, capped at one or both ends by the 19S regulatory particle (RP/PA700). The 20S proteasome core is composed of 28 subunits that are arranged in four stacked rings, resulting in a barrel-shaped structure. The two end rings are each formed by seven alpha subunits, and the two central rings are each formed by seven beta subunits. The catalytic chamber with the active sites is on the inside of the barrel.

It localises to the cytoplasm. The protein resides in the nucleus. The proteasome is a multicatalytic proteinase complex which is characterized by its ability to cleave peptides with Arg, Phe, Tyr, Leu, and Glu adjacent to the leaving group at neutral or slightly basic pH. The proteasome has an ATP-dependent proteolytic activity. This chain is Proteasome subunit alpha type-5-B (PAE2), found in Arabidopsis thaliana (Mouse-ear cress).